The chain runs to 139 residues: ATP synthase epsilon chain (139 aa).

This sequence belongs to the ATPase epsilon chain family. F-type ATPases have 2 components, CF(1) - the catalytic core - and CF(0) - the membrane proton channel. CF(1) has five subunits: alpha(3), beta(3), gamma(1), delta(1), epsilon(1). CF(0) has three main subunits: a, b and c.

It is found in the cell membrane. In terms of biological role, produces ATP from ADP in the presence of a proton gradient across the membrane. This is ATP synthase epsilon chain from Roseiflexus sp. (strain RS-1).